A 235-amino-acid chain; its full sequence is uncharacterized protein (235 aa).

To B.subtilis YncM.

This is an uncharacterized protein from Bacillus subtilis (strain 168).